The sequence spans 396 residues: Flavohemoprotein (396 aa).

Residues 1 to 136 (MLDAQTIATV…LANVFINREA (136 aa)) enclose the Globin domain. A heme b-binding site is contributed by histidine 85. Residues tyrosine 95 and glutamate 135 each act as charge relay system in the active site. The interval 147–396 (GGWEGTRDFR…YECFGPHKVL (250 aa)) is reductase. The region spanning 150-255 (EGTRDFRIVA…VAPAGDFFMA (106 aa)) is the FAD-binding FR-type domain. Residues tyrosine 188 and 204-207 (RQYS) contribute to the FAD site. Residue 268–273 (GVGQTP) coordinates NADP(+). 389–392 (CFGP) serves as a coordination point for FAD.

Belongs to the globin family. Two-domain flavohemoproteins subfamily. The protein in the C-terminal section; belongs to the flavoprotein pyridine nucleotide cytochrome reductase family. Requires heme b as cofactor. It depends on FAD as a cofactor.

The enzyme catalyses 2 nitric oxide + NADPH + 2 O2 = 2 nitrate + NADP(+) + H(+). It carries out the reaction 2 nitric oxide + NADH + 2 O2 = 2 nitrate + NAD(+) + H(+). In terms of biological role, is involved in NO detoxification in an aerobic process, termed nitric oxide dioxygenase (NOD) reaction that utilizes O(2) and NAD(P)H to convert NO to nitrate, which protects the bacterium from various noxious nitrogen compounds. Therefore, plays a central role in the inducible response to nitrosative stress. This Shigella flexneri protein is Flavohemoprotein.